The following is a 227-amino-acid chain: D-lyxose/D-mannose isomerase (227 aa).

D-fructose-binding positions include Lys90, 103-110 (HFHWRKRE), His171, Glu186, and Asp193. Mn(2+)-binding residues include His103, His105, Glu110, and His171.

Belongs to the D-lyxose ketol-isomerase family. As to quaternary structure, homodimer; disulfide-linked. Dimerization is facilitated through a disulfide bond between the two monomers of the dimeric enzyme. The cofactor is Mn(2+).

The catalysed reaction is D-lyxose = D-xylulose. The enzyme catalyses D-mannose = D-fructose. Functionally, sugar isomerase that catalyzes the reversible isomerization of D-lyxose to D-xylulose, and D-mannose to D-fructose. Shows similar activity toward D-lyxose and D-mannose with a turnover and catalytic efficiency for D-lyxose as a substrate only 1.1- and 1.3-fold higher than those for D-mannose, respectively. Shows weaker activity with L-gulose, D-talose, L-ribose and L-allose. Overexpression enables cell growth on the rare pentose D-lyxose as the sole carbon source. In Escherichia coli O157:H7, this protein is D-lyxose/D-mannose isomerase.